The following is a 117-amino-acid chain: Mediator of RNA polymerase II transcription subunit 11 (117 aa).

A2 is modified (N-acetylalanine).

The protein belongs to the Mediator complex subunit 11 family. Component of the Mediator complex, which is composed of MED1, MED4, MED6, MED7, MED8, MED9, MED10, MED11, MED12, MED13, MED13L, MED14, MED15, MED16, MED17, MED18, MED19, MED20, MED21, MED22, MED23, MED24, MED25, MED26, MED27, MED29, MED30, MED31, CCNC, CDK8 and CDC2L6/CDK11. The MED12, MED13, CCNC and CDK8 subunits form a distinct module termed the CDK8 module. Mediator containing the CDK8 module is less active than Mediator lacking this module in supporting transcriptional activation. Individual preparations of the Mediator complex lacking one or more distinct subunits have been variously termed ARC, CRSP, DRIP, PC2, SMCC and TRAP. As to expression, expressed in cochlea.

Its subcellular location is the nucleus. Functionally, component of the Mediator complex, a coactivator involved in the regulated transcription of nearly all RNA polymerase II-dependent genes. Mediator functions as a bridge to convey information from gene-specific regulatory proteins to the basal RNA polymerase II transcription machinery. Mediator is recruited to promoters by direct interactions with regulatory proteins and serves as a scaffold for the assembly of a functional pre-initiation complex with RNA polymerase II and the general transcription factors. The polypeptide is Mediator of RNA polymerase II transcription subunit 11 (Med11) (Mus musculus (Mouse)).